The chain runs to 256 residues: Protein YIPF7 (256 aa).

At 1-125 (MSNLAQFDSD…VDGSIMNETD (125 aa)) the chain is on the cytoplasmic side. Polar residues-rich tracts occupy residues 18–31 (IDNQ…SNAY) and 38–48 (RKQQAGEQPQP). The tract at residues 18-48 (IDNQEQSGNDSNAYGNLYGSRKQQAGEQPQP) is disordered. A helical membrane pass occupies residues 126–146 (LTGPILFCVALGATLLLAGKV). Position 147 (glutamine 147) is a topological domain, extracellular. The chain crosses the membrane as a helical span at residues 148-168 (FGYVYGMSAIGCLVIHALLNL). At 169–172 (MSSS) the chain is on the cytoplasmic side. A helical transmembrane segment spans residues 173 to 193 (GVSYGCVASVLGYCLLPMVIL). Residues 194–196 (SGC) are Extracellular-facing. Residues 197 to 217 (AMFFSLQGIFGIMSSLVIIGW) traverse the membrane as a helical segment. Over 218 to 235 (CSLSASKIFIAALHMEGQ) the chain is Cytoplasmic. A helical transmembrane segment spans residues 236–256 (QLLVAYPCAILYGLFALLTIF).

This sequence belongs to the YIP1 family.

The protein resides in the endoplasmic reticulum membrane. It is found in the golgi apparatus. Its subcellular location is the cis-Golgi network membrane. It localises to the trans-Golgi network membrane. The protein is Protein YIPF7 (YIPF7) of Homo sapiens (Human).